Consider the following 476-residue polypeptide: PRAME family member 6 (476 aa).

Residues 97–124 (RWKLQVLDLQDVCENFWMVWSEAMARGC) form an LRR 1; degenerate repeat. One copy of the LRR 2; degenerate repeat lies at 179-203 (HLCCKKLKILGMPFRNIRSILKMVN). The LRR 3; degenerate repeat unit spans residues 204–230 (LDCIQEVEVNCKWVLPILTQFTPYLGH). The LRR 4; degenerate repeat unit spans residues 231–266 (MRNLQKLVLSHMDVSRYVSPEQKKEIVTQFTTQFLK). 5 LRR repeats span residues 267–292 (LCCL…LSCL), 293–324 (KTSL…SQLK), 325–345 (TLDL…QILL), 349–376 (AATL…ALSR), and 377–401 (CFEL…LLSH).

Belongs to the PRAME family. As to quaternary structure, component of a CRL2 E3 ubiquitin-protein ligase complex, also named ECS (Elongin BC-CUL2/5-SOCS-box protein) complex, composed of CUL2, Elongin BC (ELOB and ELOC), RBX1 and substrate-specific adapter PRAMEF6.

The protein operates within protein modification; protein ubiquitination. Functionally, substrate-recognition component of a Cul2-RING (CRL2) E3 ubiquitin-protein ligase complex, which mediates ubiquitination of target proteins, leading to their degradation. The CRL2(PRAMEF6) complex mediates ubiquitination and degradation of truncated MSRB1/SEPX1 selenoproteins produced by failed UGA/Sec decoding. This chain is PRAME family member 6, found in Homo sapiens (Human).